The following is a 289-amino-acid chain: Phosphatidylglycerol--prolipoprotein diacylglyceryl transferase (289 aa).

The next 4 membrane-spanning stretches (helical) occupy residues 18–38 (FTIY…YVMA), 54–74 (DFVM…YVIF), 86–106 (VFYI…GVLT), and 116–136 (LSFW…QAIG). R137 provides a ligand contact to a 1,2-diacyl-sn-glycero-3-phospho-(1'-sn-glycerol). Transmembrane regions (helical) follow at residues 177–197 (HPTF…LLLL), 205–225 (GELF…IEGM), and 236–256 (LRTA…LWWY).

Belongs to the Lgt family.

It localises to the cell membrane. It catalyses the reaction L-cysteinyl-[prolipoprotein] + a 1,2-diacyl-sn-glycero-3-phospho-(1'-sn-glycerol) = an S-1,2-diacyl-sn-glyceryl-L-cysteinyl-[prolipoprotein] + sn-glycerol 1-phosphate + H(+). It participates in protein modification; lipoprotein biosynthesis (diacylglyceryl transfer). Its function is as follows. Catalyzes the transfer of the diacylglyceryl group from phosphatidylglycerol to the sulfhydryl group of the N-terminal cysteine of a prolipoprotein, the first step in the formation of mature lipoproteins. This is Phosphatidylglycerol--prolipoprotein diacylglyceryl transferase from Halalkalibacterium halodurans (strain ATCC BAA-125 / DSM 18197 / FERM 7344 / JCM 9153 / C-125) (Bacillus halodurans).